The chain runs to 296 residues: Ribonuclease H2 subunit A (296 aa).

Residues 14–236 form the RNase H type-2 domain; that stretch reads PCLMGIDEAG…CTTHLKGEVE (223 aa). Residues D20, E21, and D127 each contribute to the a divalent metal cation site.

It belongs to the RNase HII family. Eukaryotic subfamily. Requires Mn(2+) as cofactor. Mg(2+) is required as a cofactor.

It catalyses the reaction Endonucleolytic cleavage to 5'-phosphomonoester.. In terms of biological role, catalytic subunit of RNase HII, an endonuclease that specifically degrades the RNA of RNA:DNA hybrids. Participates in DNA replication, possibly by mediating the removal of lagging-strand Okazaki fragment RNA primers during DNA replication. Mediates the excision of single ribonucleotides from DNA:RNA duplexes. This chain is Ribonuclease H2 subunit A, found in Arabidopsis thaliana (Mouse-ear cress).